Here is a 255-residue protein sequence, read N- to C-terminus: Imidazole glycerol phosphate synthase subunit HisF (255 aa).

Active-site residues include D11 and D130.

Belongs to the HisA/HisF family. In terms of assembly, heterodimer of HisH and HisF.

It is found in the cytoplasm. The catalysed reaction is 5-[(5-phospho-1-deoxy-D-ribulos-1-ylimino)methylamino]-1-(5-phospho-beta-D-ribosyl)imidazole-4-carboxamide + L-glutamine = D-erythro-1-(imidazol-4-yl)glycerol 3-phosphate + 5-amino-1-(5-phospho-beta-D-ribosyl)imidazole-4-carboxamide + L-glutamate + H(+). The protein operates within amino-acid biosynthesis; L-histidine biosynthesis; L-histidine from 5-phospho-alpha-D-ribose 1-diphosphate: step 5/9. In terms of biological role, IGPS catalyzes the conversion of PRFAR and glutamine to IGP, AICAR and glutamate. The HisF subunit catalyzes the cyclization activity that produces IGP and AICAR from PRFAR using the ammonia provided by the HisH subunit. In Campylobacter jejuni subsp. jejuni serotype O:6 (strain 81116 / NCTC 11828), this protein is Imidazole glycerol phosphate synthase subunit HisF.